The following is a 302-amino-acid chain: Heme A synthase (302 aa).

The Cytoplasmic portion of the chain corresponds to 1-8 (MFSKKNLK). The helical transmembrane segment at 9–29 (WLSVLATVIMAFVQLGGALVT) threads the bilayer. Residues 30-67 (KTGSADGCGSDWPLCHGAFLPQNLPIQTLIELSHRAVS) are Extracellular-facing. A disulfide bond links cysteine 37 and cysteine 44. The active site involves glutamate 60. Histidine 63 contacts heme o. The chain crosses the membrane as a helical span at residues 68–88 (GLSLIVVLWLVIVAWKHIGYI). Residues 89-93 (KEVKP) lie on the Cytoplasmic side of the membrane. A helical membrane pass occupies residues 94 to 114 (LSCISVGFLLIQALVGAAAVM). Residues 115–122 (WQQNAYVL) are Extracellular-facing. Residues 123–143 (ALHFGISLISFSSVFVLTLII) form a helical membrane-spanning segment. Histidine 125 serves as a coordination point for heme o. At 144–161 (YEVDRKYEADELFIRKPL) the chain is on the cytoplasmic side. Residues 162–182 (RIYTWIMALIVYMTIYTGALV) traverse the membrane as a helical segment. Residues 183–215 (RHKEASLAYGQWPLPFNDLMPHNVQDWVNLTHR) are Extracellular-facing. A heme b-binding site is contributed by histidine 214. A helical transmembrane segment spans residues 216-236 (GMALIAFIWILITFIHAVNNY). Residues 237-244 (RENRTIRY) lie on the Cytoplasmic side of the membrane. The chain crosses the membrane as a helical span at residues 245–265 (GYTAAFILVILQVTTGALSII). At 266 to 271 (TEVNLF) the chain is on the extracellular side. A helical membrane pass occupies residues 272 to 292 (IALLHALFITLLFGLIAYFII). Residue histidine 276 participates in heme b binding. At 293–302 (LMLRTIRSGG) the chain is on the cytoplasmic side.

It belongs to the COX15/CtaA family. Type 1 subfamily. As to quaternary structure, interacts with CtaB. It depends on heme b as a cofactor.

The protein resides in the cell membrane. The enzyme catalyses Fe(II)-heme o + 2 A + H2O = Fe(II)-heme a + 2 AH2. Its pathway is porphyrin-containing compound metabolism; heme A biosynthesis; heme A from heme O: step 1/1. Catalyzes the conversion of heme O to heme A by two successive hydroxylations of the methyl group at C8. The first hydroxylation forms heme I, the second hydroxylation results in an unstable dihydroxymethyl group, which spontaneously dehydrates, resulting in the formyl group of heme A. The protein is Heme A synthase of Staphylococcus saprophyticus subsp. saprophyticus (strain ATCC 15305 / DSM 20229 / NCIMB 8711 / NCTC 7292 / S-41).